Here is a 382-residue protein sequence, read N- to C-terminus: O-methyltransferase okaF (382 aa).

Positions 249 and 287 each coordinate S-adenosyl-L-methionine. His-291 acts as the Proton acceptor in catalysis.

It belongs to the class I-like SAM-binding methyltransferase superfamily. Cation-independent O-methyltransferase family.

It carries out the reaction 3-desmethyl okaramine B + S-adenosyl-L-methionine = okaramine B + S-adenosyl-L-homocysteine + H(+). Its pathway is alkaloid biosynthesis. In terms of biological role, O-methyltransferase; part of the gene cluster that mediates the biosynthesis of okaramine B, a prenylated indole alkaloid that possesses an unusual octacyclic ring system, including a four-membered azetidine ring and an eight-membered azocine ring, and that exhibits insecticidal activity against silkworm larvae. Within the pathway, okaF catalyzes the last step which is the methylation of 3-desmethyl okaramine B to produce okaramine B. With okaG, OkaF is also able to produce okaramine D from okaramine E. The biosynthesis begins with the NRPS okaA that condenses two tryptophan molecules into cyclo(L-Trp-L-Trp). Prenylation by the prenyltransferase okaC then leads to the formation of cyclo(N8-(alpha,alpha-dimethylallyl)-L-Trp-6a-(alpha,alpha-dime-thylallyl)-L-Trp). This is followed by indole 2,3-epoxidation by the FAD-dependent monooxygenase okaB to facilitate the formation of the hexahydropyrrolo[2,3-b]indole (HPI) moiety of okaramine C. The cytochrome P450 monooxygenase okaD then likely catalyzes formation of the eight-membered ring of okaramine A. The dioxygenase okaE further forms the unusual 2-dimethyl-3-methyl-azetidine ring to yield 12-deshydroxyl okaramine E, as well as the hydroxylation of 12-deshydroxyl okaramine E to produce okaramine E. The cytochrome P450 monoxygenase okaG converts 12-deshydroxyl okaramine E into 3-desmethyl okaramine B which is further methylated by the methyltransferase okaF into okaramine B. In a shunt pathway, okaG and okaF together are also able to convert okaramine E into okaramine D. Okaramine H is produced by nonenzymatic conversion from okaramine A. The protein is O-methyltransferase okaF of Penicillium ochrochloron.